The following is a 274-amino-acid chain: Chromatin modification-related protein YNG2 (274 aa).

Positions 121–194 (EDEMESGPDF…ASTEREGTLD (74 aa)) are disordered. Positions 166–180 (THREKSYNKGDDTAD) are enriched in basic and acidic residues. A PHD-type zinc finger spans residues 215–264 (NLYCFCQRVSFGEMVACDGPNCKYEWFHYECVNLTEPPKGTWYCPDCKQE). The Zn(2+) site is built by cysteine 218, cysteine 220, cysteine 231, cysteine 236, histidine 242, cysteine 245, cysteine 258, and cysteine 261.

It belongs to the ING family. As to quaternary structure, interacts with H3K4me3 and to a lesser extent with H3K4me2. Component of the NuA4 histone acetyltransferase complex.

It localises to the nucleus. In terms of biological role, component of the NuA4 histone acetyltransferase complex which is involved in transcriptional activation of selected genes principally by acetylation of nucleosomal histone H4 and H2A. The NuA4 complex is also involved in DNA repair. Involved in cell cycle progression and meiosis. This is Chromatin modification-related protein YNG2 (YNG2) from Candida glabrata (strain ATCC 2001 / BCRC 20586 / JCM 3761 / NBRC 0622 / NRRL Y-65 / CBS 138) (Yeast).